The following is a 1189-amino-acid chain: Pesticidal crystal protein Cry1Ca (1189 aa).

It belongs to the delta endotoxin family.

Promotes colloidosmotic lysis by binding to the midgut epithelial cells of many lepidopteran larvae including Spodoptera species. The polypeptide is Pesticidal crystal protein Cry1Ca (cry1Ca) (Bacillus thuringiensis subsp. aizawai).